A 105-amino-acid chain; its full sequence is Insulin (105 aa).

The first 22 residues, methionine 1–alanine 22, serve as a signal peptide directing secretion. 3 cysteine pairs are disulfide-bonded: cysteine 29–cysteine 91, cysteine 41–cysteine 104, and cysteine 90–cysteine 95. The propeptide at aspartate 53–valine 82 is c peptide.

It belongs to the insulin family. Heterodimer of a B chain and an A chain linked by two disulfide bonds.

It localises to the secreted. Functionally, insulin decreases blood glucose concentration. It increases cell permeability to monosaccharides, amino acids and fatty acids. It accelerates glycolysis, the pentose phosphate cycle, and glycogen synthesis in liver. This chain is Insulin (ins), found in Oncorhynchus keta (Chum salmon).